The primary structure comprises 208 residues: Small ribosomal subunit protein eS8 (208 aa).

Positions 1-23 (MGISRDSAHKRRATGGKRKSLRK) are disordered. Residues 8 to 23 (AHKRRATGGKRKSLRK) are compositionally biased toward basic residues.

It belongs to the eukaryotic ribosomal protein eS8 family. As to quaternary structure, component of the small ribosomal subunit. Identified in a IGF2BP1-dependent mRNP granule complex containing untranslated mRNAs. Part of the small subunit (SSU) processome, composed of more than 70 proteins and the RNA chaperone small nucleolar RNA (snoRNA) U3.

The protein resides in the cytoplasm. It is found in the membrane. It localises to the nucleus. The protein localises to the nucleolus. Functionally, component of the small ribosomal subunit. The ribosome is a large ribonucleoprotein complex responsible for the synthesis of proteins in the cell. Part of the small subunit (SSU) processome, first precursor of the small eukaryotic ribosomal subunit. During the assembly of the SSU processome in the nucleolus, many ribosome biogenesis factors, an RNA chaperone and ribosomal proteins associate with the nascent pre-rRNA and work in concert to generate RNA folding, modifications, rearrangements and cleavage as well as targeted degradation of pre-ribosomal RNA by the RNA exosome. The sequence is that of Small ribosomal subunit protein eS8 (RpS8) from Drosophila melanogaster (Fruit fly).